An 89-amino-acid polypeptide reads, in one-letter code: Small ribosomal subunit protein uS14 (89 aa).

Cys52, Cys55, Cys68, and Cys71 together coordinate Zn(2+).

It belongs to the universal ribosomal protein uS14 family. As to quaternary structure, part of the 30S ribosomal subunit. Contacts proteins S3 and S10. The cofactor is Zn(2+).

Its function is as follows. Binds 16S rRNA, required for the assembly of 30S particles and may also be responsible for determining the conformation of the 16S rRNA at the A site. The sequence is that of Small ribosomal subunit protein uS14 (rpsN) from Salinibacter ruber (strain DSM 13855 / M31).